The chain runs to 95 residues: Small ribosomal subunit protein bS6 (95 aa).

Belongs to the bacterial ribosomal protein bS6 family.

In terms of biological role, binds together with bS18 to 16S ribosomal RNA. This chain is Small ribosomal subunit protein bS6, found in Desulfitobacterium hafniense (strain DSM 10664 / DCB-2).